The primary structure comprises 154 residues: Transcriptional repressor NrdR (154 aa).

The segment at C3–C34 is a zinc-finger region. In terms of domain architecture, ATP-cone spans P49–E139.

It belongs to the NrdR family. Zn(2+) is required as a cofactor.

Negatively regulates transcription of bacterial ribonucleotide reductase nrd genes and operons by binding to NrdR-boxes. The sequence is that of Transcriptional repressor NrdR from Pseudomonas putida (strain ATCC 700007 / DSM 6899 / JCM 31910 / BCRC 17059 / LMG 24140 / F1).